Consider the following 156-residue polypeptide: UPF0266 membrane protein NT01EI_1718 (156 aa).

3 helical membrane-spanning segments follow: residues 6–26, 46–63, and 67–87; these read IALL…EAIM, DSLI…RNIS, and APFT…IFYL.

Belongs to the UPF0266 family.

It localises to the cell inner membrane. This Edwardsiella ictaluri (strain 93-146) protein is UPF0266 membrane protein NT01EI_1718.